The following is a 331-amino-acid chain: MNVAVIGAGRMGADHVRRLHESINNATVAAVVDIDLDRAKAATEGTGALAVASLAEAFAVEGVNAVLIATPGFLHEEALYQALQRDVPILCEKPMTPDAASAWRVVQAEVALGRQRIQVGFMRQFDAGYQSLKSEIEAGAAGSLLMLHCANRNASTLADFTEPMLINDSVVHEFDAIRFFTGEEITSVQVQVQVQVQVQVQVQRGKRSSLAPEGISDPQHVLIETESGILADVEIFVNARYGYEVATQAVFENGVRSIGAGEVTPSFIERFAAAYDAEVQAWVDAALHGEIGGPSAWDGYATAACCEAGVAAQRSGQRTAVVLAAKPELYR.

Belongs to the Gfo/Idh/MocA family. In terms of assembly, homotetramer.

The catalysed reaction is myo-inositol + NAD(+) = scyllo-inosose + NADH + H(+). Involved in the oxidation of myo-inositol (MI) to 2-keto-myo-inositol (2KMI or 2-inosose). This chain is Inositol 2-dehydrogenase, found in Renibacterium salmoninarum (strain ATCC 33209 / DSM 20767 / JCM 11484 / NBRC 15589 / NCIMB 2235).